The following is a 340-amino-acid chain: Glucokinase (340 aa).

17-22 (GDIGGT) is a binding site for ATP.

It belongs to the bacterial glucokinase family.

The protein localises to the cytoplasm. It carries out the reaction D-glucose + ATP = D-glucose 6-phosphate + ADP + H(+). This is Glucokinase from Allorhizobium ampelinum (strain ATCC BAA-846 / DSM 112012 / S4) (Agrobacterium vitis (strain S4)).